The primary structure comprises 328 residues: MYNFKDSVNITVVSGNGGSGCVSFLREKFNAKGGPDGGNGGSGGSVIFKVRENLSTLSFYKNGHVLCAENGKPGMGFKRSGANGKDLTLFVPPNTEVYNENDGTLLYRLKNLNDEFVVLKGGRGGLGNWNFKTSVRRVPRFAQPGESGNSLSVRLELFLVADIGLVGLPNAGKSSLLNRITSAKSRVANYPFTTKIPHLGMLRRSYDDLIIADIPGIIKGASFGVGLGTKFLKHIAKTKILALVIDISEANFLESYNILLNELKSYSHKLFNKKKIIIANKLDLDGSEKNFDCLIKALGKEKVVGISIYENRGIDELIKEFFILAKTF.

The 159-residue stretch at 2–160 (YNFKDSVNIT…LSVRLELFLV (159 aa)) folds into the Obg domain. An OBG-type G domain is found at 161-326 (ADIGLVGLPN…LIKEFFILAK (166 aa)). GTP contacts are provided by residues 167 to 174 (GLPNAGKS), 192 to 196 (FTTKI), 213 to 216 (DIPG), 280 to 283 (NKLD), and 307 to 309 (SIY). Mg(2+) is bound by residues serine 174 and threonine 194.

It belongs to the TRAFAC class OBG-HflX-like GTPase superfamily. OBG GTPase family. Monomer. The cofactor is Mg(2+).

It localises to the cytoplasm. Functionally, an essential GTPase which binds GTP, GDP and possibly (p)ppGpp with moderate affinity, with high nucleotide exchange rates and a fairly low GTP hydrolysis rate. Plays a role in control of the cell cycle, stress response, ribosome biogenesis and in those bacteria that undergo differentiation, in morphogenesis control. The sequence is that of GTPase Obg from Borreliella burgdorferi (strain ATCC 35210 / DSM 4680 / CIP 102532 / B31) (Borrelia burgdorferi).